Reading from the N-terminus, the 446-residue chain is Probable beta-1,4-xylosyltransferase IRX9L (446 aa).

The tract at residues 1–26 (MSRRNAGAMQREGSVKDWEEFDPSPS) is disordered. At 1–85 (MSRRNAGAMQ…SRSKGMSLKR (85 aa)) the chain is on the cytoplasmic side. Residues 86–106 (AMLQLLVCFMVGIFIGFTPPF) traverse the membrane as a helical; Signal-anchor for type II membrane protein segment. The Lumenal segment spans residues 107 to 446 (SVDLPGKIAS…RNLDAVVPIT (340 aa)). N185, N258, N361, and N411 each carry an N-linked (GlcNAc...) asparagine glycan.

It belongs to the glycosyltransferase 43 family.

The protein resides in the golgi apparatus membrane. In terms of biological role, probable beta-1,4-xylosyltransferase involved in xylan biosynthesis in cell walls. The protein is Probable beta-1,4-xylosyltransferase IRX9L of Oryza sativa subsp. japonica (Rice).